A 686-amino-acid chain; its full sequence is MGEFKVHRVRFFNYVPSGIRCVAYNNQSNRLAVSRTDGTVEIYNLSANYFQEKFFPGHESRATEALCWAEGQRLFSAGLNGEIMEYDLQALNIKYAMDAFGGPIWSMAASPSGSQLLVGCEDGSVKLFQITPDKIQFERNFDRQKSRILSLSWHPSGTHIAAGSIDYISVFDVKSGSAVHKMIVDRQYMGVSKRKCIVWGVAFLSDGTIISVDSAGKVQFWDSATGTLVKSHLIANADVQSIAVADQEDSFVVGTAEGTVFHFQLVPVTSNSSEKQWVRTKPFQHHTHDVRTVAHSPTALISGGTDTHLVFRPLMEKVEVKNYDAALRKITFPHRCLISCSKKRQLLLFQFAHHLELWRLGSTVATGKNGDTLPLSKNADHLLHLKTKGPENIICSCISPCGSWIAYSTVSRFFLYRLNYEHDNISLKRVSKMPAFLRSALQILFSEDSTKLFVASNQGALHIVQLSGGSFKHLHAFQPQSGTVEAMCLLAVSPDGNWLAASGTSAGVHVYNVKQLKLHCTVPAYNFPVTAMAIAPNTNNLVIAHSDQQVFEYSIPDKQYTDWSRTVQKQGFHHLWLQRDTPITHISFHPKRPMHILLHDAYMFCIIDKSLPLPNDKTLLYNPFPPTNESDVIRRRTAHAFKISKIYKPLLFMDLLDERTLVAVERPLDDIIAQLPPPIKKKKFGT.

WD repeat units follow at residues 7-50 (HRVR…ANYF), 51-92 (QEKF…QALN), 93-135 (IKYA…PDKI), 136-181 (QFER…AVHK), 182-226 (MIVD…SATG), 227-275 (TLVK…SSEK), 276-317 (QWVR…LMEK), 318-377 (VEVK…PLSK), 378-427 (NADH…NISL), 428-475 (KRVS…KHLH), 476-516 (AFQP…VKQL), 517-566 (KLHC…WSRT), 567-627 (VQKQ…FPPT), and 628-666 (NESD…AVER). A Glycyl lysine isopeptide (Lys-Gly) (interchain with G-Cter in SUMO2) cross-link involves residue K321.

In terms of assembly, interacts with HIVEP1 Interacts with NOL11. Part of the small subunit (SSU) processome, composed of more than 70 proteins and the RNA chaperone small nucleolar RNA (snoRNA) U3. May be a component of the proposed t-UTP subcomplex of the ribosomal small subunit (SSU) processome containing at least UTP4, WDR43, HEATR1, UTP15, WDR75. Post-translationally, may be phosphorylated during mitosis; may control the association of this protein with WRD43 and UTP15.

It localises to the nucleus. It is found in the nucleolus. The protein localises to the chromosome. Ribosome biogenesis factor. Involved in nucleolar processing of pre-18S ribosomal RNA. Part of the small subunit (SSU) processome, first precursor of the small eukaryotic ribosomal subunit. During the assembly of the SSU processome in the nucleolus, many ribosome biogenesis factors, an RNA chaperone and ribosomal proteins associate with the nascent pre-rRNA and work in concert to generate RNA folding, modifications, rearrangements and cleavage as well as targeted d Involved in SSU pre-rRNA processing at sites A', A0, 1 and 2b. Required for optimal pre-ribosomal RNA transcription by RNA polymerase. May be a transcriptional regulator. Functionally, (Microbial infection) Acts as a positive regulator of HIVEP1 which specifically binds to the DNA sequence 5'-GGGACTTTCC-3' found in enhancer elements of numerous viral promoters such as those of HIV-1, SV40, or CMV. The sequence is that of U3 small nucleolar RNA-associated protein 4 homolog from Homo sapiens (Human).